The primary structure comprises 413 residues: MTVLVEVREYDPSKDLATVEDVERRCEVGPAGKLSLFTDLLGDPICRVRHSPSYLMLVAEIGPKEKKELVGMIRGCIKTVTCGITTKRLDLTHNKSQNDVVITKPLYTKLAYILGLRVSPTHRRQGIGFKLVKAMEDWFSQNGAEYSYFATENDNHASVNLFTGKCGYAEFRTPSILVNPVYAHRVNISRRVTVIKLEPSDAELLYRLRFSTTEFFPRDIDSVLNNKLSLGTFVAVPRGSCYGSGSRSWPGSAKFLEYPPDSWAVLSVWNCKDSFRLEVRGASRLRRVVSKATRMVDKTLPFLKIPSIPAVFRPFGLHFMYGIGGEGPRAEKMVKALCDHAHNLAKEGGCGVVAAEVAGEEPLRRGIPHWKVLSCAEDLWCIKRLGEDYSDGSVGDWTKSPPGDSIFVDPREF.

In terms of domain architecture, N-acetyltransferase spans 5–187 (VEVREYDPSK…VNPVYAHRVN (183 aa)).

The protein belongs to the acetyltransferase family.

The sequence is that of Probable N-acetyltransferase HLS1-like from Arabidopsis thaliana (Mouse-ear cress).